A 914-amino-acid polypeptide reads, in one-letter code: Translation initiation factor IF-2 (914 aa).

Disordered stretches follow at residues 52-84 and 98-326; these read GGGK…VKAP and AGGN…GVRL. Residues 57-68 are compositionally biased toward low complexity; that stretch reads AEGAAKAPAKAA. Basic and acidic residues predominate over residues 69-84; it reads AKGDAKTAAKGDVKAP. Low complexity predominate over residues 98-138; that stretch reads AGGNGEAAAPPAQPGGTATTPAAQATPEAPARPGPAAARPS. Pro residues-rich tracts occupy residues 139-169 and 193-207; these read APAP…PAPK and PRPV…PGAP. The span at 236 to 296 shows a compositional bias: gly residues; sequence RPGGGRPGGP…GAAGAFGRPG (61 aa). Positions 300–309 are enriched in basic residues; the sequence is RRGRKSKRQK. One can recognise a tr-type G domain in the interval 421–581; that stretch reads TRPPVVTVMG…AVLLTADAAL (161 aa). GTP contacts are provided by residues 430–437, 469–473, and 523–526; these read GHVDHGKT, DTPGH, and NKID.

It belongs to the TRAFAC class translation factor GTPase superfamily. Classic translation factor GTPase family. IF-2 subfamily.

The protein resides in the cytoplasm. One of the essential components for the initiation of protein synthesis. Protects formylmethionyl-tRNA from spontaneous hydrolysis and promotes its binding to the 30S ribosomal subunits. Also involved in the hydrolysis of GTP during the formation of the 70S ribosomal complex. The polypeptide is Translation initiation factor IF-2 (Mycobacterium avium (strain 104)).